The sequence spans 564 residues: Dihydropyrimidinase-related protein 5 (564 aa).

A phosphothreonine mark is found at T509 and T514. Phosphoserine is present on residues S532 and S538. The residue at position 559 (R559) is an Omega-N-methylarginine.

It belongs to the metallo-dependent hydrolases superfamily. Hydantoinase/dihydropyrimidinase family. As to quaternary structure, homotetramer, and heterotetramer with other DPYS-like proteins. Interacts with DPYSL2, DPYSL3 and DPYSL4. Interacts with SEPTIN4 isoform 4. Interacts with MAP2 and TUBB3. As to expression, detected in brain.

It is found in the cytoplasm. Functionally, involved in the negative regulation of dendrite outgrowth. In Mus musculus (Mouse), this protein is Dihydropyrimidinase-related protein 5 (Dpysl5).